The primary structure comprises 481 residues: Small ribosomal subunit protein bS1 (481 aa).

4 S1 motif domains span residues 36-105 (GDIV…LSKK), 123-188 (DEAV…LSRR), 209-277 (GTIR…LSLK), and 294-363 (GQIV…LSLK). The interval 429–467 (TAQMEKFAAAEAAGRGADDQSSASSAPSEKTAGGSLASD) is disordered. Residues 437 to 456 (AAEAAGRGADDQSSASSAPS) show a composition bias toward low complexity.

Belongs to the bacterial ribosomal protein bS1 family.

Its function is as follows. Binds mRNA; thus facilitating recognition of the initiation point. It is needed to translate mRNA with a short Shine-Dalgarno (SD) purine-rich sequence. The sequence is that of Small ribosomal subunit protein bS1 (rpsA) from Mycobacterium tuberculosis (strain CDC 1551 / Oshkosh).